A 463-amino-acid polypeptide reads, in one-letter code: uncharacterized protein (463 aa).

The next 6 helical transmembrane spans lie at 3–23, 88–108, 112–132, 216–236, 245–265, and 276–296; these read IPPEVHSGLLSAGCGPGSLLV, VAAAAAYCSALAAMPTPAELA, AIHGVLIATNFFGINTVPIAL, FSPAVTVVLALVALQLYDFLW, LLLLPFFTPTLSALTALSALI, and LPIAAALGPGDQWGANLAVAV. Positions 303 to 322 are disordered; it reads VPGGSPPTSNPAPAAPSSNS. The segment covering 306–316 has biased composition (pro residues); the sequence is GSPPTSNPAPA. The next 2 helical transmembrane spans lie at 323 to 343 and 419 to 439; these read VGSASAAPGISYAVPGLAPPG and AGTLGFAGTAPTTSGAAAGMV.

The protein belongs to the mycobacterial PPE family.

Its subcellular location is the cell membrane. This is an uncharacterized protein from Mycobacterium tuberculosis (strain CDC 1551 / Oshkosh).